The following is a 359-amino-acid chain: Mannose-1-phosphate guanylyltransferase catalytic subunit beta (359 aa).

The tract at residues 2–221 (KALILVGGFG…EGFWMDVGQP (220 aa)) is substrate-binding domain. Residue Asp109 participates in GDP-alpha-D-mannose binding. Asp109 contributes to the Mg(2+) binding site. Lys161 is an active-site residue. GDP-alpha-D-mannose is bound at residue Asp217. Residue Asp217 participates in Mg(2+) binding. A hexapeptide repeat domain region spans residues 244-359 (ATGNGIIGPV…SSIPEPEIIM (116 aa)).

Belongs to the transferase hexapeptide repeat family. Component of the GMPPA-GMPPB mannose-1-phosphate guanylyltransferase complex composed of 4 GMPPA subunits and 8 gmppB subunits; the complex is organized into three layers, a central layer made up of 2 gmppA dimers sandwiched between two layers each made up of 2 gmppB dimers. gmppB catalytic activity is reduced when part of the complex and binding of GDP-alpha-D-Mannose by gmppA induces allosteric feedback inhibition of gmppB. Mg(2+) is required as a cofactor.

It carries out the reaction alpha-D-mannose 1-phosphate + GTP + H(+) = GDP-alpha-D-mannose + diphosphate. It participates in nucleotide-sugar biosynthesis; GDP-alpha-D-mannose biosynthesis; GDP-alpha-D-mannose from alpha-D-mannose 1-phosphate (GTP route): step 1/1. Its activity is regulated as follows. Enzyme activity is reduced by incorporation into the GMPPA-GMPPB mannose-1-phosphate guanylyltransferase complex. Allosterically inhibited, when part of the GMPPA-GMPPB complex, by GDP-alpha-D-mannose binding to GMPPA. Its function is as follows. Catalytic subunit of the GMPPA-GMPPB mannose-1-phosphate guanylyltransferase complex. Catalyzes the formation of GDP-mannose, an essential precursor of glycan moieties of glycoproteins and glycolipids. Can catalyze the reverse reaction in vitro. Together with GMPPA regulates GDP-alpha-D-mannose levels. The polypeptide is Mannose-1-phosphate guanylyltransferase catalytic subunit beta (gmppB) (Dictyostelium discoideum (Social amoeba)).